The chain runs to 325 residues: Glutarate 2-hydroxylase (325 aa).

Fe cation-binding residues include His-160, Asp-162, and His-292.

This sequence belongs to the glutarate hydroxylase family. As to quaternary structure, homotetramer. The cofactor is Fe(2+).

The enzyme catalyses glutarate + 2-oxoglutarate + O2 = (S)-2-hydroxyglutarate + succinate + CO2. It participates in amino-acid degradation. Its function is as follows. Acts as an alpha-ketoglutarate-dependent dioxygenase catalyzing hydroxylation of glutarate (GA) to L-2-hydroxyglutarate (L2HG). Functions in a L-lysine degradation pathway that proceeds via cadaverine, glutarate and L-2-hydroxyglutarate. This chain is Glutarate 2-hydroxylase, found in Escherichia coli O7:K1 (strain IAI39 / ExPEC).